The primary structure comprises 151 residues: Putative pre-16S rRNA nuclease (151 aa).

The protein belongs to the YqgF nuclease family.

The protein resides in the cytoplasm. Could be a nuclease involved in processing of the 5'-end of pre-16S rRNA. The chain is Putative pre-16S rRNA nuclease from Myxococcus xanthus (strain DK1622).